We begin with the raw amino-acid sequence, 447 residues long: MREIVHLQTGQCGNQIGAAFWQTISGEHGLDGSGVYNGTSDLQLERMNVYFNEASGNKYVPRAVLVDLEPGTMDAVRAGPXGQLFRPDNFVFGQSGAGNNWAKGHYTEGAELVDQVLDVVRREAEGCDCLQGFQITHSLGGGTGAGMGTLLISKIREEFPDRMMATFSVMPSPKVSDTVVEPYNATLSVHQLVENSDATFCIDNEALYDICMRTLKLNNPSYGDLNHLVSAVMSGVTTCLRFPGQLNSDLRKLAVNMVPFPRLHFFMVGFAPLTSRGAHSFRAVTVPELTQQIFDPKNMMAASDFRNGRYLTCSAIYRGKVSMKEVEDQIRNVQNKNTAYFVEWIPNNVQTALCSIPPRGLKMSSTFVGNSTSIQELFKRVGDQFTAMFRRKAFLHWYTGEGMDEMEFTEAESNMNDLVSEYQQYQEASVSEGEEEYDEEAPLEGEE.

Gln11, Glu69, Ser138, Gly142, Thr143, Gly144, Asn204, and Asn226 together coordinate GTP. Glu69 is a Mg(2+) binding site. The interval 424–447 (QYQEASVSEGEEEYDEEAPLEGEE) is disordered. The segment covering 432–447 (EGEEEYDEEAPLEGEE) has biased composition (acidic residues).

Belongs to the tubulin family. In terms of assembly, dimer of alpha and beta chains. A typical microtubule is a hollow water-filled tube with an outer diameter of 25 nm and an inner diameter of 15 nM. Alpha-beta heterodimers associate head-to-tail to form protofilaments running lengthwise along the microtubule wall with the beta-tubulin subunit facing the microtubule plus end conferring a structural polarity. Microtubules usually have 13 protofilaments but different protofilament numbers can be found in some organisms and specialized cells. The cofactor is Mg(2+).

The protein localises to the cytoplasm. It localises to the cytoskeleton. Its function is as follows. Tubulin is the major constituent of microtubules, a cylinder consisting of laterally associated linear protofilaments composed of alpha- and beta-tubulin heterodimers. Microtubules grow by the addition of GTP-tubulin dimers to the microtubule end, where a stabilizing cap forms. Below the cap, tubulin dimers are in GDP-bound state, owing to GTPase activity of alpha-tubulin. This chain is Tubulin beta chain (TUB1), found in Cercospora beticola (Sugarbeet leaf spot fungus).